The primary structure comprises 226 residues: Putative N-acetylmannosamine-6-phosphate 2-epimerase (226 aa).

This sequence belongs to the NanE family.

It carries out the reaction an N-acyl-D-glucosamine 6-phosphate = an N-acyl-D-mannosamine 6-phosphate. The protein operates within amino-sugar metabolism; N-acetylneuraminate degradation; D-fructose 6-phosphate from N-acetylneuraminate: step 3/5. Converts N-acetylmannosamine-6-phosphate (ManNAc-6-P) to N-acetylglucosamine-6-phosphate (GlcNAc-6-P). This Mycoplasma mycoides subsp. mycoides SC (strain CCUG 32753 / NCTC 10114 / PG1) protein is Putative N-acetylmannosamine-6-phosphate 2-epimerase.